Here is a 61-residue protein sequence, read N- to C-terminus: uncharacterized protein (61 aa).

Residues 39 to 61 (PRPFTPGLADPRRLGPRRVQAAQ) are disordered.

This is an uncharacterized protein from Pan troglodytes (Chimpanzee).